The following is a 105-amino-acid chain: MPKLVVVTREGEESVIEAETGLSVMEVIRDAGIDELLALCGGCCSCATCHVFVDPAFNGLLPDMSDDENDLLDSSDHRDDRSRLSCQLTMTDELDGLTVTIAPED.

In terms of domain architecture, 2Fe-2S ferredoxin-type spans 2 to 105 (PKLVVVTREG…GLTVTIAPED (104 aa)). The [2Fe-2S] cluster site is built by Cys40, Cys46, Cys49, and Cys86.

It belongs to the adrenodoxin/putidaredoxin family. In terms of assembly, the chloroacetanilide N-alkylformylase multicomponent enzyme system is composed of an oxygenase component (CndA) and an electron transfer component formed by a ferredoxin reductase (CndC1) and a ferredoxin (CndB1). In vitro, chloroacetanilide N-alkylformylase assays in which CndB1 is substituted for CndB2 demonstrate that the two enzymes possess nearly identical activities. [2Fe-2S] cluster is required as a cofactor.

Its function is as follows. Component of the chloroacetanilide N-alkylformylase multicomponent enzyme system involved in the degradation of chloroacetanilide herbicides (N-alkoxyalkyl-N-chloroacetyl-substituted aniline derivatives). In vitro, functions as an intermediate electron transfer protein. This Rhizorhabdus wittichii (strain DC-6 / KACC 16600) (Sphingomonas wittichii) protein is Chloroacetanilide N-alkylformylase 2, ferredoxin component.